The following is a 563-amino-acid chain: Sperm-tail PG-rich repeat-containing protein 2 (563 aa).

STPGR repeat units follow at residues 21 to 34 (VGPG…PKQQ), 63 to 73 (PGPAHYNVSQA), and 97 to 107 (GPGPASYDCPY). Residues 131 to 163 (IPSIPSSGKSHGYHLNEDDTIMRRTPPSSDKTM) are disordered. STPGR repeat units lie at residues 200-219 (GPGP…YENI), 250-263 (PGPG…QFDH), 292-321 (TPAP…FGQR), 334-353 (LPGP…QVKK), 423-438 (LPAP…YDMS), 473-483 (GPGPATYNPIL), and 507-518 (SPGPTTYELSPF).

This chain is Sperm-tail PG-rich repeat-containing protein 2 (Stpg2), found in Rattus norvegicus (Rat).